A 300-amino-acid polypeptide reads, in one-letter code: tRNA dimethylallyltransferase (300 aa).

ATP is bound at residue 11–18 (GPTAVGKS). 13–18 (TAVGKS) is a binding site for substrate. The interval 35–38 (DSIQ) is interaction with substrate tRNA.

Belongs to the IPP transferase family. As to quaternary structure, monomer. It depends on Mg(2+) as a cofactor.

It carries out the reaction adenosine(37) in tRNA + dimethylallyl diphosphate = N(6)-dimethylallyladenosine(37) in tRNA + diphosphate. Functionally, catalyzes the transfer of a dimethylallyl group onto the adenine at position 37 in tRNAs that read codons beginning with uridine, leading to the formation of N6-(dimethylallyl)adenosine (i(6)A). The chain is tRNA dimethylallyltransferase from Borreliella afzelii (strain PKo) (Borrelia afzelii).